Reading from the N-terminus, the 194-residue chain is Fe/S biogenesis protein NfuA (194 aa).

[4Fe-4S] cluster contacts are provided by Cys151 and Cys154.

It belongs to the NfuA family. As to quaternary structure, homodimer. The cofactor is [4Fe-4S] cluster.

In terms of biological role, involved in iron-sulfur cluster biogenesis. Binds a 4Fe-4S cluster, can transfer this cluster to apoproteins, and thereby intervenes in the maturation of Fe/S proteins. Could also act as a scaffold/chaperone for damaged Fe/S proteins. The protein is Fe/S biogenesis protein NfuA of Actinobacillus succinogenes (strain ATCC 55618 / DSM 22257 / CCUG 43843 / 130Z).